The sequence spans 208 residues: Protein Nef (208 aa).

The interval 1–33 (MGGKWSKRMSGWSAVRERMKRAEPAEPAADGVG) is disordered. Glycine 2 is lipidated: N-myristoyl glycine; by host. Serine 6 carries the post-translational modification Phosphoserine; by host. Over residues 15 to 24 (VRERMKRAEP) the composition is skewed to basic and acidic residues. The acidic; interacts with host PACS1 and PACS2; stabilizes the interaction of NEF/MHC-I with host AP1M1; necessary for MHC-I internalization stretch occupies residues 64 to 67 (EDED). The tract at residues 71–80 (PVRPQVPLRP) is SH3-binding; interaction with Src family tyrosine kinases. A PxxP; stabilizes the interaction of NEF/MHC-I with host AP1M1; necessary for MHC-I internalization motif is present at residues 74-77 (PQVP). Positions 110–126 (DILDLWIHHTQGYFPDW) are mediates dimerization, Nef-PTE1 interaction. The binding to ATP6V1H stretch occupies residues 150-182 (VDPDYVEEANAGENNSLLHPMSQHGMDDPEKEV). Residues 166–167 (LL) carry the Dileucine internalization motif; necessary for CD4 internalization motif. The Diacidic; necessary for CD4 internalization motif lies at 176–177 (DD).

The protein belongs to the lentivirus primate group Nef protein family. As to quaternary structure, monomer; cytosolic form. Homodimer; membrane bound form. Interacts with Nef associated p21-activated kinase (PAK2); this interaction activates PAK2. Associates with the Nef-MHC-I-AP1 complex; this complex is required for MHC-I internalization. Interacts (via C-terminus) with host PI3-kinase. Interacts with host PACS1; this interaction seems to be weak. Interacts with host PACS2. Interacts with host LCK and MAPK3; these interactions inhibit the kinase activity of the latter. Interacts with host ATP6V1H; this interaction may play a role in CD4 endocytosis. Associates with the CD4-Nef-AP2 complex; this complex is required for CD4 internalization. Interacts with host AP2 subunit alpha and AP2 subunit sigma2. Interacts with TCR-zeta chain; this interaction up-regulates the Fas ligand (FasL) surface expression. Interacts with host HCK, LYN, and SRC; these interactions activate the Src family kinases. Interacts with MAP3K5; this interaction inhibits the Fas and TNFR-mediated death signals. Interacts with beta-COP and PTE1. Interacts with human RACK1; this increases Nef phosphorylation by PKC. Interacts with TP53; this interaction decreases the half-life of TP53, protecting the infected cell against p53-mediated apoptosis. Post-translationally, the virion-associated Nef proteins are cleaved by the viral protease to release the soluble C-terminal core protein. Nef is probably cleaved concomitantly with viral structural proteins on maturation of virus particles. In terms of processing, myristoylated. Phosphorylated on serine residues, probably by host PKCdelta and theta.

Its subcellular location is the host cell membrane. It localises to the virion. It is found in the secreted. The protein resides in the host Golgi apparatus membrane. Its function is as follows. Factor of infectivity and pathogenicity, required for optimal virus replication. Alters numerous pathways of T-lymphocyte function and down-regulates immunity surface molecules in order to evade host defense and increase viral infectivity. Alters the functionality of other immunity cells, like dendritic cells, monocytes/macrophages and NK cells. In terms of biological role, in infected CD4(+) T-lymphocytes, down-regulates the surface MHC-I, mature MHC-II, CD4, CD28, CCR5 and CXCR4 molecules. Mediates internalization and degradation of host CD4 through the interaction of with the cytoplasmic tail of CD4, the recruitment of AP-2 (clathrin adapter protein complex 2), internalization through clathrin coated pits, and subsequent transport to endosomes and lysosomes for degradation. Diverts host MHC-I molecules to the trans-Golgi network-associated endosomal compartments by an endocytic pathway to finally target them for degradation. MHC-I down-regulation may involve AP-1 (clathrin adapter protein complex 1) or possibly Src family kinase-ZAP70/Syk-PI3K cascade recruited by PACS2. In consequence infected cells are masked for immune recognition by cytotoxic T-lymphocytes. Decreasing the number of immune receptors also prevents reinfection by more HIV particles (superinfection). Down-regulates host SERINC3 and SERINC5 thereby excluding these proteins from the viral particles. Virion infectivity is drastically higher when SERINC3 or SERINC5 are excluded from the viral envelope, because these host antiviral proteins impair the membrane fusion event necessary for subsequent virion penetration. Functionally, bypasses host T-cell signaling by inducing a transcriptional program nearly identical to that of anti-CD3 cell activation. Interaction with TCR-zeta chain up-regulates the Fas ligand (FasL). Increasing surface FasL molecules and decreasing surface MHC-I molecules on infected CD4(+) cells send attacking cytotoxic CD8+ T-lymphocytes into apoptosis. Plays a role in optimizing the host cell environment for viral replication without causing cell death by apoptosis. Protects the infected cells from apoptosis in order to keep them alive until the next virus generation is ready to strike. Inhibits the Fas and TNFR-mediated death signals by blocking MAP3K5/ASK1. Decreases the half-life of TP53, protecting the infected cell against p53-mediated apoptosis. Inhibits the apoptotic signals regulated by the Bcl-2 family proteins through the formation of a Nef/PI3-kinase/PAK2 complex that leads to activation of PAK2 and induces phosphorylation of host BAD. Its function is as follows. Extracellular Nef protein targets CD4(+) T-lymphocytes for apoptosis by interacting with CXCR4 surface receptors. The polypeptide is Protein Nef (Human immunodeficiency virus type 1 group M subtype B (isolate SF162) (HIV-1)).